A 229-amino-acid polypeptide reads, in one-letter code: Urease accessory protein UreF (229 aa).

It belongs to the UreF family. As to quaternary structure, ureD, UreF and UreG form a complex that acts as a GTP-hydrolysis-dependent molecular chaperone, activating the urease apoprotein by helping to assemble the nickel containing metallocenter of UreC. The UreE protein probably delivers the nickel.

Its subcellular location is the cytoplasm. Its function is as follows. Required for maturation of urease via the functional incorporation of the urease nickel metallocenter. The polypeptide is Urease accessory protein UreF (Trichormus variabilis (strain ATCC 29413 / PCC 7937) (Anabaena variabilis)).